The primary structure comprises 269 residues: Tryptophan synthase alpha chain (269 aa).

Active-site proton acceptor residues include glutamate 49 and aspartate 60.

This sequence belongs to the TrpA family. As to quaternary structure, tetramer of two alpha and two beta chains.

The catalysed reaction is (1S,2R)-1-C-(indol-3-yl)glycerol 3-phosphate + L-serine = D-glyceraldehyde 3-phosphate + L-tryptophan + H2O. It participates in amino-acid biosynthesis; L-tryptophan biosynthesis; L-tryptophan from chorismate: step 5/5. Functionally, the alpha subunit is responsible for the aldol cleavage of indoleglycerol phosphate to indole and glyceraldehyde 3-phosphate. In Pseudomonas syringae pv. syringae, this protein is Tryptophan synthase alpha chain.